The following is a 314-amino-acid chain: Serine protease 46 (314 aa).

Residues 44–281 (VVNGKVVEVG…FTQWIKRQIG (238 aa)) form the Peptidase S1 domain. A disulfide bond links cysteine 69 and cysteine 85. Catalysis depends on charge relay system residues histidine 84 and aspartate 130. 3 cysteine pairs are disulfide-bonded: cysteine 164–cysteine 239, cysteine 197–cysteine 219, and cysteine 229–cysteine 257. The active-site Charge relay system is serine 233. Residues 293-313 (FLSPFILTGYILLVSLGSLWL) traverse the membrane as a helical segment.

It belongs to the peptidase S1 family.

It localises to the membrane. This is Serine protease 46 (Prss46) from Rattus norvegicus (Rat).